The primary structure comprises 500 residues: Plexin domain-containing protein 1 (500 aa).

The signal sequence occupies residues 1–18; sequence MRGELWLLVLVLREAARA. Residues 19 to 426 are Extracellular-facing; sequence LSPQPGAGHD…TKGTPVHLGT (408 aa). Disordered stretches follow at residues 20–39 and 46–78; these read SPQP…AAKG and RRAR…DTLP. S33 carries an O-linked (Xyl...) (chondroitin sulfate) serine glycan. Residues 47-60 show a composition bias toward basic and acidic residues; it reads RARESPGHVSEPDR. Residues N80 and N197 are each glycosylated (N-linked (GlcNAc...) asparagine). The segment at 359–379 is disordered; it reads FQDEDHDSASPDTSFSPYDGD. Over residues 368-379 the composition is skewed to polar residues; the sequence is SPDTSFSPYDGD. The chain crosses the membrane as a helical span at residues 427–447; the sequence is IVGIVLAVLLVAAIILAGIYI. The Cytoplasmic portion of the chain corresponds to 448-500; sequence NGHPTSNAALFFIERRPHHWPAMKFRSHPDHSTYAEVEPSGHEKEGFMEAEQC. The span at 479–494 shows a compositional bias: basic and acidic residues; that stretch reads STYAEVEPSGHEKEGF. Residues 479–500 are disordered; it reads STYAEVEPSGHEKEGFMEAEQC.

It belongs to the plexin family. As to quaternary structure, interacts with NID1. May interact with CTTN. N-glycosylated. Detected in urine (at protein level). Detected in endothelial cells from colorectal cancer, and in endothelial cells from primary cancers of the lung, liver, pancreas, breast and brain. Not detectable in endothelial cells from normal tissue. Expressed in fibrovascular membrane with increased expression in individuals with proliferative diabetic retinopathy.

It localises to the secreted. Its subcellular location is the cell membrane. The protein localises to the cell junction. The protein resides in the tight junction. It is found in the cytoplasm. Functionally, plays a critical role in endothelial cell capillary morphogenesis. In Homo sapiens (Human), this protein is Plexin domain-containing protein 1 (PLXDC1).